The primary structure comprises 169 residues: Ubiquitin-fold modifier-conjugating enzyme 1 (169 aa).

The Glycyl thioester intermediate role is filled by Cys-116.

The protein belongs to the ubiquitin-conjugating enzyme family. UFC1 subfamily.

In terms of biological role, E2-like enzyme which forms an intermediate with UFM1 via a thioester linkage. This is Ubiquitin-fold modifier-conjugating enzyme 1 from Nematostella vectensis (Starlet sea anemone).